The chain runs to 586 residues: Asparagine synthetase [glutamine-hydrolyzing] 1 (586 aa).

The active-site For GATase activity is Cys-2. The Glutamine amidotransferase type-2 domain maps to 2–185; it reads CGILAVLGCS…PGHLYSSRER (184 aa). Residues 50–54, 75–77, and Asp-98 contribute to the L-glutamine site; these read RLAIV and NGE. One can recognise an Asparagine synthetase domain in the interval 193–516; it reads PTWFSESIPS…PQNSARLTVP (324 aa). ATP-binding positions include Leu-231, Val-267, and 341–342; that span reads SG.

It carries out the reaction L-aspartate + L-glutamine + ATP + H2O = L-asparagine + L-glutamate + AMP + diphosphate + H(+). Its pathway is amino-acid biosynthesis; L-asparagine biosynthesis; L-asparagine from L-aspartate (L-Gln route): step 1/1. The polypeptide is Asparagine synthetase [glutamine-hydrolyzing] 1 (AS1) (Lotus japonicus (Lotus corniculatus var. japonicus)).